A 669-amino-acid chain; its full sequence is p135Gag-Myb-Ets-transforming protein (669 aa).

Positions 1-10 (NSTMRRKVEQ) are enriched in basic and acidic residues. 2 disordered regions span residues 1–27 (NSTM…SATT) and 132–153 (TQNH…NTMT). The segment at 90–142 (PAAAAIQRHYNDEDPEKEKRIKELELLLMSTENELKGQQALPTQNHTANYPGW) is transcriptional activation domain. A PNT domain is found at 276–361 (ATFSGFAKEQ…EHLEILQKEE (86 aa)). The segment at residues 556–640 (GSGPIQLWQF…AGKRYVYRFV (85 aa)) is a DNA-binding region (ETS).

Its subcellular location is the host nucleus. Its function is as follows. DNA-binding protein that specifically recognizes the sequence 5'-YAAC[GT]G-3'. The Myb-Ets protein induces predominantly erythroblastosis in chicken and transforms avian erythroblasts and immature myelomonocytic cells in culture. It appears that the Ets domain is responsible for the effects on erythroid cells and that the Myb domain encodes the myeloid-transforming capacity. This is p135Gag-Myb-Ets-transforming protein (GAG) from Avian leukemia virus E26.